Reading from the N-terminus, the 324-residue chain is Biotin synthase (324 aa).

The region spanning 43–273 (FCGNYFNFCS…HVFLRLAGGR (231 aa)) is the Radical SAM core domain. Residues Cys61, Cys65, and Cys68 each contribute to the [4Fe-4S] cluster site. Residues Ser105, Cys138, Cys198, and Arg268 each contribute to the [2Fe-2S] cluster site.

The protein belongs to the radical SAM superfamily. Biotin synthase family. Homodimer. [4Fe-4S] cluster serves as cofactor. The cofactor is [2Fe-2S] cluster.

The enzyme catalyses (4R,5S)-dethiobiotin + (sulfur carrier)-SH + 2 reduced [2Fe-2S]-[ferredoxin] + 2 S-adenosyl-L-methionine = (sulfur carrier)-H + biotin + 2 5'-deoxyadenosine + 2 L-methionine + 2 oxidized [2Fe-2S]-[ferredoxin]. The protein operates within cofactor biosynthesis; biotin biosynthesis; biotin from 7,8-diaminononanoate: step 2/2. Its function is as follows. Catalyzes the conversion of dethiobiotin (DTB) to biotin by the insertion of a sulfur atom into dethiobiotin via a radical-based mechanism. This Campylobacter hominis (strain ATCC BAA-381 / DSM 21671 / CCUG 45161 / LMG 19568 / NCTC 13146 / CH001A) protein is Biotin synthase.